The sequence spans 305 residues: Protoheme IX farnesyltransferase (305 aa).

The next 9 membrane-spanning stretches (helical) occupy residues 31-51, 52-72, 96-118, 123-145, 151-171, 179-199, 225-245, 247-267, and 281-301; these read VMSL…YSVH, PFIA…AGAI, VIES…FFMA, LLAS…IWLK, NIVI…AAVS, IILF…LALF, ILIY…IGMN, FIYL…AGSL, and FAYS…TNTI.

It belongs to the UbiA prenyltransferase family. Protoheme IX farnesyltransferase subfamily.

It localises to the cell membrane. It catalyses the reaction heme b + (2E,6E)-farnesyl diphosphate + H2O = Fe(II)-heme o + diphosphate. The protein operates within porphyrin-containing compound metabolism; heme O biosynthesis; heme O from protoheme: step 1/1. Converts heme B (protoheme IX) to heme O by substitution of the vinyl group on carbon 2 of heme B porphyrin ring with a hydroxyethyl farnesyl side group. The protein is Protoheme IX farnesyltransferase of Rickettsia africae (strain ESF-5).